A 169-amino-acid polypeptide reads, in one-letter code: Transcription antitermination protein NusB (169 aa).

The disordered stretch occupies residues 150–169; that stretch reads AAATSRRTETAGGESNDAGS.

Belongs to the NusB family.

Functionally, involved in transcription antitermination. Required for transcription of ribosomal RNA (rRNA) genes. Binds specifically to the boxA antiterminator sequence of the ribosomal RNA (rrn) operons. The chain is Transcription antitermination protein NusB from Rhodococcus jostii (strain RHA1).